We begin with the raw amino-acid sequence, 112 residues long: Pediocin PA-1 immunity protein (112 aa).

Imparts immunity to pediocin PA-1/ACH to naturally sensitive host strains. This Pediococcus acidilactici protein is Pediocin PA-1 immunity protein (pedB).